A 281-amino-acid chain; its full sequence is 4-deoxy-L-threo-5-hexosulose-uronate ketol-isomerase (281 aa).

Residues H198, H200, E205, and H248 each contribute to the Zn(2+) site.

It belongs to the KduI family. Zn(2+) serves as cofactor.

It catalyses the reaction 5-dehydro-4-deoxy-D-glucuronate = 3-deoxy-D-glycero-2,5-hexodiulosonate. It participates in glycan metabolism; pectin degradation; 2-dehydro-3-deoxy-D-gluconate from pectin: step 4/5. In terms of biological role, catalyzes the isomerization of 5-dehydro-4-deoxy-D-glucuronate to 3-deoxy-D-glycero-2,5-hexodiulosonate. This Levilactobacillus brevis (strain ATCC 367 / BCRC 12310 / CIP 105137 / JCM 1170 / LMG 11437 / NCIMB 947 / NCTC 947) (Lactobacillus brevis) protein is 4-deoxy-L-threo-5-hexosulose-uronate ketol-isomerase.